The primary structure comprises 216 residues: 2-phospho-L-lactate guanylyltransferase (216 aa).

It belongs to the CofC family. As to quaternary structure, homodimer.

The catalysed reaction is (2S)-2-phospholactate + GTP + H(+) = (2S)-lactyl-2-diphospho-5'-guanosine + diphosphate. The protein operates within cofactor biosynthesis; coenzyme F420 biosynthesis. Guanylyltransferase that catalyzes the activation of (2S)-2-phospholactate (2-PL) as (2S)-lactyl-2-diphospho-5'-guanosine, via the condensation of 2-PL with GTP. It is involved in the biosynthesis of coenzyme F420, a hydride carrier cofactor. This chain is 2-phospho-L-lactate guanylyltransferase, found in Methanocaldococcus infernus (strain DSM 11812 / JCM 15783 / ME).